The sequence spans 161 residues: Regulator of ribonuclease activity A (161 aa).

The protein belongs to the RraA family. In terms of assembly, homotrimer. Binds to both RNA-binding sites in the C-terminal region of Rne and to RhlB.

It localises to the cytoplasm. In terms of biological role, globally modulates RNA abundance by binding to RNase E (Rne) and regulating its endonucleolytic activity. Can modulate Rne action in a substrate-dependent manner by altering the composition of the degradosome. Modulates RNA-binding and helicase activities of the degradosome. This chain is Regulator of ribonuclease activity A, found in Shigella dysenteriae serotype 1 (strain Sd197).